A 285-amino-acid polypeptide reads, in one-letter code: Urease accessory protein UreD (285 aa).

It belongs to the UreD family. UreD, UreF and UreG form a complex that acts as a GTP-hydrolysis-dependent molecular chaperone, activating the urease apoprotein by helping to assemble the nickel containing metallocenter of UreC. The UreE protein probably delivers the nickel.

Its subcellular location is the cytoplasm. Its function is as follows. Required for maturation of urease via the functional incorporation of the urease nickel metallocenter. This is Urease accessory protein UreD from Cenarchaeum symbiosum (strain A).